The chain runs to 211 residues: Arginine exporter protein ArgO (211 aa).

6 consecutive transmembrane segments (helical) span residues 1 to 21 (MISY…PLGP), 37 to 57 (LMIA…GIFG), 68 to 88 (LLAL…FGAL), 111 to 131 (IIAT…DTFV), 147 to 167 (WFAL…ALLA), and 179 to 199 (AQRI…FQLA).

It belongs to the LysE/ArgO transporter (TC 2.A.75) family.

The protein resides in the cell inner membrane. It carries out the reaction L-arginine(in) = L-arginine(out). Functionally, involved in the export of arginine. Important to control the intracellular level of arginine and the correct balance between arginine and lysine. This chain is Arginine exporter protein ArgO, found in Salmonella paratyphi A (strain ATCC 9150 / SARB42).